We begin with the raw amino-acid sequence, 532 residues long: Pentatricopeptide repeat-containing protein At5g66500, mitochondrial (532 aa).

Residues 1 to 33 constitute a mitochondrion transit peptide; it reads MFACLRIGRFIRLGNVTVKSTNLVLRCVFIRNF. PPR repeat units lie at residues 48–82, 83–117, 118–148, 149–183, 184–218, 223–248, 250–280, 281–314, 315–345, 346–380, 383–413, and 419–453; these read DLSSLNSQLSSHLRSGNPNDTLALFLQIHRASPDL, SSHTFTPVLGACSLLSYPETGRQVHALMIKQGAET, GTISKTALIDMYSKYGHLVDSVRVFESVEEK, DLVSWNALLSGFLRNGKGKEALGVFAAMYRERVEI, SEFTLSSVVKTCASLKILQQGKQVHAMVVVTGRDL, TAMISFYSSVGLINEAMKVYNSLNVH, DEVMLNSLISGCIRNRNYKEAFLLMSRQRPN, VRVLSSSLAGCSDNSDLWIGKQIHCVALRNGFVS, DSKLCNGLMDMYGKCGQIVQARTIFRAIPSK, SVVSWTSMIDAYAVNGDGVKALEIFREMCEEGSGV, NSVTFLVVISACAHAGLVKEGKECFGMMKEK, and GTEHYVCFIDILSKAGETEEIWRLVERMMENDNQS. Residues 458–532 are type E motif; degenerate; sequence IWVAVLSACS…VKTAGHSLFI (75 aa).

Belongs to the PPR family. PCMP-E subfamily.

The protein localises to the mitochondrion. The protein is Pentatricopeptide repeat-containing protein At5g66500, mitochondrial (PCMP-E38) of Arabidopsis thaliana (Mouse-ear cress).